We begin with the raw amino-acid sequence, 51 residues long: Insulin (51 aa).

Cystine bridges form between cysteine 7-cysteine 37, cysteine 19-cysteine 50, and cysteine 36-cysteine 41.

This sequence belongs to the insulin family. Heterodimer of a B chain and an A chain linked by two disulfide bonds.

It localises to the secreted. Its function is as follows. Insulin decreases blood glucose concentration. It increases cell permeability to monosaccharides, amino acids and fatty acids. It accelerates glycolysis, the pentose phosphate cycle, and glycogen synthesis in liver. This chain is Insulin (INS), found in Elephas maximus (Indian elephant).